A 338-amino-acid chain; its full sequence is MTKQKVAILGPGSWGTALSQVLNDNGHDVRLWGNIPDQIEEINTKHTNRHYFKDIVLDKNITATLDLGQALSDVDAVLFVVPTKVTRLVARQVAAILDHKVVVMHASKGLEPETHERLSTILEEEIPAHFRSEVVVVSGPSHAEETIVRDITLITAASKDIEAAKYVQSLFSNHYFRLYTNTDVIGVETAGALKNIIAVGAGALHGLGYGDNAKAAVITRGLAEITRLGVKLGADPLTYSGLSGVGDLIVTGTSVHSRNWRAGAALGRGEKLEDIEHNMGMVIEGIATTKVAYEIAQDLGVYMPITTAIYKSIYEGADIKESILGMMSNEFRSENEWH.

NADPH is bound by residues Ser-13, Trp-14, and Lys-108. Positions 108, 139, and 141 each coordinate sn-glycerol 3-phosphate. An NADPH-binding site is contributed by Ala-143. The sn-glycerol 3-phosphate site is built by Lys-194, Asp-247, Ser-257, Arg-258, and Asn-259. Lys-194 serves as the catalytic Proton acceptor. Arg-258 lines the NADPH pocket. 2 residues coordinate NADPH: Val-282 and Glu-284.

Belongs to the NAD-dependent glycerol-3-phosphate dehydrogenase family.

The protein localises to the cytoplasm. It catalyses the reaction sn-glycerol 3-phosphate + NAD(+) = dihydroxyacetone phosphate + NADH + H(+). It carries out the reaction sn-glycerol 3-phosphate + NADP(+) = dihydroxyacetone phosphate + NADPH + H(+). The protein operates within membrane lipid metabolism; glycerophospholipid metabolism. In terms of biological role, catalyzes the reduction of the glycolytic intermediate dihydroxyacetone phosphate (DHAP) to sn-glycerol 3-phosphate (G3P), the key precursor for phospholipid synthesis. The chain is Glycerol-3-phosphate dehydrogenase [NAD(P)+] from Streptococcus pyogenes serotype M28 (strain MGAS6180).